Consider the following 45-residue polypeptide: Large ribosomal subunit protein bL34 (45 aa).

Positions 1–45 are disordered; that stretch reads MTKRTFGGTSRKRKRVSGFRVRMRSHTGRRVIKSRRKRGRDRIAV. Positions 10–45 are enriched in basic residues; sequence SRKRKRVSGFRVRMRSHTGRRVIKSRRKRGRDRIAV.

It belongs to the bacterial ribosomal protein bL34 family.

In Prochlorococcus marinus (strain MIT 9515), this protein is Large ribosomal subunit protein bL34.